We begin with the raw amino-acid sequence, 136 residues long: Large ribosomal subunit protein uL16 (136 aa).

Belongs to the universal ribosomal protein uL16 family. Part of the 50S ribosomal subunit.

Binds 23S rRNA and is also seen to make contacts with the A and possibly P site tRNAs. The sequence is that of Large ribosomal subunit protein uL16 from Aliivibrio fischeri (strain ATCC 700601 / ES114) (Vibrio fischeri).